The following is a 150-amino-acid chain: Viral late gene transcription factor 2 (150 aa).

This sequence belongs to the orthopoxvirus VLTF-2/OPG126 family. In terms of assembly, interacts with itself. Interacts with the late transcription factors VLTF-1/OPG093.

Its function is as follows. Acts with RNA polymerase to initiate transcription from late gene promoters. In Vaccinia virus (strain Copenhagen) (VACV), this protein is Viral late gene transcription factor 2 (OPG126).